The primary structure comprises 384 residues: Succinyl-diaminopimelate desuccinylase (384 aa).

Residue His73 participates in Zn(2+) binding. The active site involves Asp75. Asp106 contributes to the Zn(2+) binding site. Residue Glu140 is the Proton acceptor of the active site. Zn(2+) contacts are provided by Glu141, Glu169, and His358.

Belongs to the peptidase M20A family. DapE subfamily. In terms of assembly, homodimer. Zn(2+) serves as cofactor. Requires Co(2+) as cofactor.

The enzyme catalyses N-succinyl-(2S,6S)-2,6-diaminopimelate + H2O = (2S,6S)-2,6-diaminopimelate + succinate. The protein operates within amino-acid biosynthesis; L-lysine biosynthesis via DAP pathway; LL-2,6-diaminopimelate from (S)-tetrahydrodipicolinate (succinylase route): step 3/3. In terms of biological role, catalyzes the hydrolysis of N-succinyl-L,L-diaminopimelic acid (SDAP), forming succinate and LL-2,6-diaminopimelate (DAP), an intermediate involved in the bacterial biosynthesis of lysine and meso-diaminopimelic acid, an essential component of bacterial cell walls. The sequence is that of Succinyl-diaminopimelate desuccinylase from Pelagibacter ubique (strain HTCC1062).